Consider the following 436-residue polypeptide: Trigger factor (436 aa).

The PPIase FKBP-type domain occupies 163–248 (GDRVTVDFEG…VKKIEAAHLP (86 aa)).

The protein belongs to the FKBP-type PPIase family. Tig subfamily.

The protein localises to the cytoplasm. It carries out the reaction [protein]-peptidylproline (omega=180) = [protein]-peptidylproline (omega=0). Involved in protein export. Acts as a chaperone by maintaining the newly synthesized protein in an open conformation. Functions as a peptidyl-prolyl cis-trans isomerase. The polypeptide is Trigger factor (Paracidovorax citrulli (strain AAC00-1) (Acidovorax citrulli)).